A 188-amino-acid chain; its full sequence is Elongation factor P (188 aa).

This sequence belongs to the elongation factor P family.

It localises to the cytoplasm. Its pathway is protein biosynthesis; polypeptide chain elongation. Functionally, involved in peptide bond synthesis. Stimulates efficient translation and peptide-bond synthesis on native or reconstituted 70S ribosomes in vitro. Probably functions indirectly by altering the affinity of the ribosome for aminoacyl-tRNA, thus increasing their reactivity as acceptors for peptidyl transferase. The chain is Elongation factor P from Rhodopseudomonas palustris (strain BisA53).